The chain runs to 239 residues: Ribosomal RNA small subunit methyltransferase G (239 aa).

Residues Gly-79, Phe-84, Ala-130–Glu-131, and Arg-149 each bind S-adenosyl-L-methionine.

It belongs to the methyltransferase superfamily. RNA methyltransferase RsmG family.

It localises to the cytoplasm. Its function is as follows. Specifically methylates the N7 position of a guanine in 16S rRNA. The chain is Ribosomal RNA small subunit methyltransferase G from Lactobacillus delbrueckii subsp. bulgaricus (strain ATCC 11842 / DSM 20081 / BCRC 10696 / JCM 1002 / NBRC 13953 / NCIMB 11778 / NCTC 12712 / WDCM 00102 / Lb 14).